Reading from the N-terminus, the 148-residue chain is SsrA-binding protein (148 aa).

The tract at residues 119–148 is disordered; that stretch reads AKGKKQHDKRETEKKRDWEREKARLMRSPG. Positions 126–142 are enriched in basic and acidic residues; that stretch reads DKRETEKKRDWEREKAR.

Belongs to the SmpB family.

The protein resides in the cytoplasm. Required for rescue of stalled ribosomes mediated by trans-translation. Binds to transfer-messenger RNA (tmRNA), required for stable association of tmRNA with ribosomes. tmRNA and SmpB together mimic tRNA shape, replacing the anticodon stem-loop with SmpB. tmRNA is encoded by the ssrA gene; the 2 termini fold to resemble tRNA(Ala) and it encodes a 'tag peptide', a short internal open reading frame. During trans-translation Ala-aminoacylated tmRNA acts like a tRNA, entering the A-site of stalled ribosomes, displacing the stalled mRNA. The ribosome then switches to translate the ORF on the tmRNA; the nascent peptide is terminated with the 'tag peptide' encoded by the tmRNA and targeted for degradation. The ribosome is freed to recommence translation, which seems to be the essential function of trans-translation. The sequence is that of SsrA-binding protein from Paraburkholderia xenovorans (strain LB400).